The sequence spans 174 residues: Flavodoxin (174 aa).

The region spanning isoleucine 4 to lysine 166 is the Flavodoxin-like domain.

The protein belongs to the flavodoxin family. FMN serves as cofactor.

Low-potential electron donor to a number of redox enzymes. This is Flavodoxin (fldA) from Buchnera aphidicola subsp. Baizongia pistaciae (strain Bp).